A 505-amino-acid chain; its full sequence is Glutamate--tRNA ligase (505 aa).

A 'HIGH' region motif is present at residues 12–22 (PSPTGALHIGG). The short motif at 260–264 (KLSKR) is the 'KMSKS' region element. Position 263 (K263) interacts with ATP.

This sequence belongs to the class-I aminoacyl-tRNA synthetase family. Glutamate--tRNA ligase type 1 subfamily. As to quaternary structure, monomer.

The protein resides in the cytoplasm. It carries out the reaction tRNA(Glu) + L-glutamate + ATP = L-glutamyl-tRNA(Glu) + AMP + diphosphate. In terms of biological role, catalyzes the attachment of glutamate to tRNA(Glu) in a two-step reaction: glutamate is first activated by ATP to form Glu-AMP and then transferred to the acceptor end of tRNA(Glu). In Parabacteroides distasonis (strain ATCC 8503 / DSM 20701 / CIP 104284 / JCM 5825 / NCTC 11152), this protein is Glutamate--tRNA ligase.